The following is a 376-amino-acid chain: Chaperone protein DnaJ (376 aa).

The J domain maps to 5–70; the sequence is DYYEILGVSK…QKRAAYDQYG (66 aa). The CR-type zinc finger occupies 131–209; that stretch reads GVTKEIRIPT…CHGHGRVERS (79 aa). Positions 144, 147, 161, 164, 183, 186, 197, and 200 each coordinate Zn(2+). 4 CXXCXGXG motif repeats span residues 144–151, 161–168, 183–190, and 197–204; these read CDVCHGSG, CPTCHGSG, CPHCQGRG, and CNKCHGHG.

It belongs to the DnaJ family. As to quaternary structure, homodimer. The cofactor is Zn(2+).

Its subcellular location is the cytoplasm. Functionally, participates actively in the response to hyperosmotic and heat shock by preventing the aggregation of stress-denatured proteins and by disaggregating proteins, also in an autonomous, DnaK-independent fashion. Unfolded proteins bind initially to DnaJ; upon interaction with the DnaJ-bound protein, DnaK hydrolyzes its bound ATP, resulting in the formation of a stable complex. GrpE releases ADP from DnaK; ATP binding to DnaK triggers the release of the substrate protein, thus completing the reaction cycle. Several rounds of ATP-dependent interactions between DnaJ, DnaK and GrpE are required for fully efficient folding. Also involved, together with DnaK and GrpE, in the DNA replication of plasmids through activation of initiation proteins. The chain is Chaperone protein DnaJ from Escherichia fergusonii (strain ATCC 35469 / DSM 13698 / CCUG 18766 / IAM 14443 / JCM 21226 / LMG 7866 / NBRC 102419 / NCTC 12128 / CDC 0568-73).